A 297-amino-acid chain; its full sequence is tRNA(Ile)-lysidine synthase (297 aa).

Residue 16-21 (SGGSDS) participates in ATP binding.

Belongs to the tRNA(Ile)-lysidine synthase family.

It localises to the cytoplasm. It carries out the reaction cytidine(34) in tRNA(Ile2) + L-lysine + ATP = lysidine(34) in tRNA(Ile2) + AMP + diphosphate + H(+). Its function is as follows. Ligates lysine onto the cytidine present at position 34 of the AUA codon-specific tRNA(Ile) that contains the anticodon CAU, in an ATP-dependent manner. Cytidine is converted to lysidine, thus changing the amino acid specificity of the tRNA from methionine to isoleucine. This chain is tRNA(Ile)-lysidine synthase, found in Mesomycoplasma hyopneumoniae (strain 232) (Mycoplasma hyopneumoniae).